A 135-amino-acid chain; its full sequence is Peptide methionine sulfoxide reductase MsrB (135 aa).

One can recognise a MsrB domain in the interval 13 to 135; sequence DADWREQLTP…NGHSMVFEPV (123 aa). Positions 52, 55, 101, and 104 each coordinate Zn(2+). The active-site Nucleophile is the C124.

It belongs to the MsrB Met sulfoxide reductase family. It depends on Zn(2+) as a cofactor.

The enzyme catalyses L-methionyl-[protein] + [thioredoxin]-disulfide + H2O = L-methionyl-(R)-S-oxide-[protein] + [thioredoxin]-dithiol. This chain is Peptide methionine sulfoxide reductase MsrB, found in Agrobacterium fabrum (strain C58 / ATCC 33970) (Agrobacterium tumefaciens (strain C58)).